The sequence spans 181 residues: Oligoribonuclease (181 aa).

The Exonuclease domain occupies 8 to 171 (LIWVDLEMTG…EDIKESIAEM (164 aa)). Y129 is a catalytic residue.

It belongs to the oligoribonuclease family.

It localises to the cytoplasm. In terms of biological role, 3'-to-5' exoribonuclease specific for small oligoribonucleotides. This is Oligoribonuclease from Shewanella frigidimarina (strain NCIMB 400).